We begin with the raw amino-acid sequence, 445 residues long: Phosphoglucosamine mutase (445 aa).

Catalysis depends on S102, which acts as the Phosphoserine intermediate. The Mg(2+) site is built by S102, D241, D243, and D245. S102 bears the Phosphoserine mark.

The protein belongs to the phosphohexose mutase family. Requires Mg(2+) as cofactor. Post-translationally, activated by phosphorylation.

It carries out the reaction alpha-D-glucosamine 1-phosphate = D-glucosamine 6-phosphate. Its function is as follows. Catalyzes the conversion of glucosamine-6-phosphate to glucosamine-1-phosphate. This Salmonella dublin (strain CT_02021853) protein is Phosphoglucosamine mutase.